A 580-amino-acid polypeptide reads, in one-letter code: PX domain-containing protein kinase-like protein (580 aa).

The PX domain occupies 14–126; that stretch reads LDDTVPLTAA…KFLDPNNYSA (113 aa). Positions 88–481 constitute a Protein kinase domain; it reads FIAERQKGLQ…VENSEEQPVK (394 aa). The tract at residues 433 to 551 is disordered; that stretch reads EQKQIHQHRR…LPQAVNGVNR (119 aa). 2 stretches are compositionally biased toward basic residues: residues 437–448 and 457–469; these read IHQHRRLTRAQS and KRRK…KSKR. Residues 483–514 are compositionally biased toward low complexity; it reads SNANNSAGSGASSPLTSPSSPTPPSTAGLSSA. Residues 515–531 are compositionally biased toward pro residues; sequence LPPPPPPPPPPPPPAGP. Residues 549–568 form the WH2 domain; the sequence is VNRGALLSSIQNFQKGTLRK.

The protein belongs to the protein kinase superfamily.

It localises to the cytoplasm. Its subcellular location is the cell membrane. Its function is as follows. Binds to and modulates brain Na,K-ATPase subunits ATP1B1 and ATP1B3 and may thereby participate in the regulation of electrical excitability and synaptic transmission. May not display kinase activity. This chain is PX domain-containing protein kinase-like protein, found in Rattus norvegicus (Rat).